The primary structure comprises 170 residues: Inner membrane protein p22 (170 aa).

Residues 1 to 3 are Intravirion-facing; sequence MST. A helical transmembrane segment spans residues 4-24; it reads LLIALIALIVLLIIILVVFLY. The Virion surface portion of the chain corresponds to 25 to 170; it reads YKKQQPPKKV…LYLPRNHKYA (146 aa).

This sequence belongs to the asfivirus inner membrane protein p22 family.

It localises to the virion membrane. Its subcellular location is the host cell membrane. This Ornithodoros (relapsing fever ticks) protein is Inner membrane protein p22.